The primary structure comprises 259 residues: Phosphatidylglycerol--prolipoprotein diacylglyceryl transferase (259 aa).

A run of 4 helical transmembrane segments spans residues 9–29, 55–75, 92–112, and 117–137; these read IIFY…VVGI, FITY…VLLY, EGGM…YLFC, and VNFL…LFLG. Arg-138 lines the a 1,2-diacyl-sn-glycero-3-phospho-(1'-sn-glycerol) pocket. Transmembrane regions (helical) follow at residues 172–192, 201–221, and 228–248; these read QLYE…YATF, GLNS…IEIF, and IGFI…MLIL.

Belongs to the Lgt family.

It is found in the cell inner membrane. It carries out the reaction L-cysteinyl-[prolipoprotein] + a 1,2-diacyl-sn-glycero-3-phospho-(1'-sn-glycerol) = an S-1,2-diacyl-sn-glyceryl-L-cysteinyl-[prolipoprotein] + sn-glycerol 1-phosphate + H(+). It functions in the pathway protein modification; lipoprotein biosynthesis (diacylglyceryl transfer). Its function is as follows. Catalyzes the transfer of the diacylglyceryl group from phosphatidylglycerol to the sulfhydryl group of the N-terminal cysteine of a prolipoprotein, the first step in the formation of mature lipoproteins. This Rickettsia akari (strain Hartford) protein is Phosphatidylglycerol--prolipoprotein diacylglyceryl transferase.